The sequence spans 117 residues: Large ribosomal subunit protein uL18 (117 aa).

The protein belongs to the universal ribosomal protein uL18 family. In terms of assembly, part of the 50S ribosomal subunit; part of the 5S rRNA/L5/L18/L25 subcomplex. Contacts the 5S and 23S rRNAs.

Its function is as follows. This is one of the proteins that bind and probably mediate the attachment of the 5S RNA into the large ribosomal subunit, where it forms part of the central protuberance. This chain is Large ribosomal subunit protein uL18, found in Azoarcus sp. (strain BH72).